The sequence spans 369 residues: Cobalt-precorrin-5B C(1)-methyltransferase (369 aa).

This sequence belongs to the CbiD family.

It catalyses the reaction Co-precorrin-5B + S-adenosyl-L-methionine = Co-precorrin-6A + S-adenosyl-L-homocysteine. It participates in cofactor biosynthesis; adenosylcobalamin biosynthesis; cob(II)yrinate a,c-diamide from sirohydrochlorin (anaerobic route): step 6/10. Functionally, catalyzes the methylation of C-1 in cobalt-precorrin-5B to form cobalt-precorrin-6A. The sequence is that of Cobalt-precorrin-5B C(1)-methyltransferase from Brucella melitensis biotype 2 (strain ATCC 23457).